The chain runs to 89 residues: Putative regulatory protein CYB_0055 (89 aa).

This sequence belongs to the RemA family.

In Synechococcus sp. (strain JA-2-3B'a(2-13)) (Cyanobacteria bacterium Yellowstone B-Prime), this protein is Putative regulatory protein CYB_0055.